Consider the following 136-residue polypeptide: 2-hydroxyisobutanoyl-CoA mutase small subunit (136 aa).

The B12-binding domain occupies proline 5–arginine 133. Position 18 (histidine 18) interacts with adenosylcob(III)alamin.

Belongs to the acyl-CoA mutase small subunit family. As to quaternary structure, homotetramer composed of two large substrate-binding subunits (HcmA) and two small cobalamin-binding subunits (HcmB). Requires adenosylcob(III)alamin as cofactor.

The enzyme catalyses 2-hydroxyisobutanoyl-CoA = (3S)-3-hydroxybutanoyl-CoA. In terms of biological role, together with HcmA, catalyzes the isomerization of 2-hydroxyisobutyryl-CoA and 3-hydroxybutyryl-CoA. Is specific for 2-hydroxyisobutyryl-CoA and (S)-3-hydroxybutyryl-CoA, and shows only very low activity with (R)-3-hydroxybutyryl-CoA, isobutyryl-CoA and butyryl-CoA. In vitro, can isomerize pivalyl-CoA and isovaleryl-CoA, with much lower efficiency. Plays a central role in the degradation of substrates bearing a tert-butyl moiety, such as the fuel oxygenate methyl tert-butyl ether (MTBE) and its metabolites. The polypeptide is 2-hydroxyisobutanoyl-CoA mutase small subunit (Aquincola tertiaricarbonis).